A 451-amino-acid chain; its full sequence is Tubulin alpha-2 chain (451 aa).

Position 11 (Gln-11) interacts with GTP. An N6-acetyllysine modification is found at Lys-40. GTP is bound by residues Glu-71, Gly-144, Thr-145, Thr-179, Asn-206, and Asn-228. Glu-71 serves as a coordination point for Mg(2+). Glu-254 is a catalytic residue.

This sequence belongs to the tubulin family. As to quaternary structure, dimer of alpha and beta chains. A typical microtubule is a hollow water-filled tube with an outer diameter of 25 nm and an inner diameter of 15 nM. Alpha-beta heterodimers associate head-to-tail to form protofilaments running lengthwise along the microtubule wall with the beta-tubulin subunit facing the microtubule plus end conferring a structural polarity. Microtubules usually have 13 protofilaments but different protofilament numbers can be found in some organisms and specialized cells. It depends on Mg(2+) as a cofactor. Post-translationally, undergoes a tyrosination/detyrosination cycle, the cyclic removal and re-addition of a C-terminal tyrosine residue by the enzymes tubulin tyrosine carboxypeptidase (TTCP) and tubulin tyrosine ligase (TTL), respectively.

It is found in the cytoplasm. The protein resides in the cytoskeleton. It catalyses the reaction GTP + H2O = GDP + phosphate + H(+). In terms of biological role, tubulin is the major constituent of microtubules, a cylinder consisting of laterally associated linear protofilaments composed of alpha- and beta-tubulin heterodimers. Microtubules grow by the addition of GTP-tubulin dimers to the microtubule end, where a stabilizing cap forms. Below the cap, tubulin dimers are in GDP-bound state, owing to GTPase activity of alpha-tubulin. The sequence is that of Tubulin alpha-2 chain (TUBA2) from Chlamydomonas reinhardtii (Chlamydomonas smithii).